The following is a 265-amino-acid chain: Urease accessory protein UreH (265 aa).

It belongs to the UreD family. UreH, UreF and UreG form a complex that acts as a GTP-hydrolysis-dependent molecular chaperone, activating the urease apoprotein by helping to assemble the nickel containing metallocenter of UreC. The UreE protein probably delivers the nickel.

Its subcellular location is the cytoplasm. Its function is as follows. Required for maturation of urease via the functional incorporation of the urease nickel metallocenter. This Helicobacter pylori (strain G27) protein is Urease accessory protein UreH.